We begin with the raw amino-acid sequence, 146 residues long: Large ribosomal subunit protein bL9 (146 aa).

The protein belongs to the bacterial ribosomal protein bL9 family.

Binds to the 23S rRNA. In Nautilia profundicola (strain ATCC BAA-1463 / DSM 18972 / AmH), this protein is Large ribosomal subunit protein bL9.